Here is a 1823-residue protein sequence, read N- to C-terminus: THO complex subunit 2 (1823 aa).

Positions 935–1003 (NRYESEISKQ…RRRLSREKDT (69 aa)) form a coiled coil. The Nuclear localization signal motif lies at 964–969 (KRKKEK). Disordered stretches follow at residues 1244-1382 (LVGV…KDLN) and 1394-1823 (ALSS…GSRE). Composition is skewed to basic and acidic residues over residues 1272–1283 (QMLKTKPLDGRT), 1312–1330 (KSMEQKETDETPRISDENP), and 1356–1367 (AKQDFGKDDGKS). Residues 1394–1409 (ALSSTAANGSIATGSS) are compositionally biased toward polar residues. Positions 1432-1596 (PRHEIVTSVR…EKSHPDDHFH (165 aa)) are enriched in basic and acidic residues. A compositionally biased stretch (pro residues) spans 1600–1610 (LPPPPPLPPNI). 4 stretches are compositionally biased toward basic and acidic residues: residues 1616–1625 (AAKEDLERRA), 1636–1648 (PRHEEREKRRSEE), 1655–1706 (DDAK…FEAS), and 1768–1785 (LGKEASSKMARRDPDPIA). 2 positions are modified to phosphoserine: serine 1646 and serine 1696. Residues 1802-1816 (MTVNGKTTRGEQSGS) are compositionally biased toward polar residues.

Belongs to the THOC2 family. As to quaternary structure, component of the THO complex, which is composed of THO1, THO2, THO3, THO5, THO6 and THO7.

The protein resides in the nucleus. Acts as a component of the THO subcomplex of the TREX complex which is thought to couple mRNA transcription, processing and nuclear export. The polypeptide is THO complex subunit 2 (THO2) (Arabidopsis thaliana (Mouse-ear cress)).